A 539-amino-acid chain; its full sequence is Probable quinate permease (539 aa).

Over Met1–Tyr22 the chain is Cytoplasmic. The chain crosses the membrane as a helical span at residues Leu23 to Gly43. At Thr44 to Ser74 the chain is on the extracellular side. The helical transmembrane segment at Cys75–Gly95 threads the bilayer. At Arg96–Lys97 the chain is on the cytoplasmic side. The helical transmembrane segment at Trp98 to Asn118 threads the bilayer. At Gly119 to Arg130 the chain is on the extracellular side. Residues Val131–Leu151 form a helical membrane-spanning segment. At Ala152–Arg159 the chain is on the cytoplasmic side. A helical transmembrane segment spans residues Leu160–Tyr180. The Extracellular segment spans residues Gly181–Trp193. Residues Leu194–Val214 traverse the membrane as a helical segment. Over Lys215–Arg285 the chain is Cytoplasmic. A helical transmembrane segment spans residues Leu286–Tyr306. The Extracellular portion of the chain corresponds to Tyr307–Leu325. A helical transmembrane segment spans residues Thr326 to Ile346. The Cytoplasmic portion of the chain corresponds to Asp347–Arg352. The chain crosses the membrane as a helical span at residues Leu353–Ile373. Topologically, residues Lys374–Asn387 are extracellular. Residues Gly388–Trp408 form a helical membrane-spanning segment. Over Asn409–Tyr456 the chain is Cytoplasmic. The helical transmembrane segment at Gly457–Val477 threads the bilayer. Residues Pro478–Glu539 are Extracellular-facing.

It belongs to the major facilitator superfamily. Sugar transporter (TC 2.A.1.1) family. Interacts with creB. Ubiquitinated. Deubiquitinated by creB, probably to control its activity or amount.

It is found in the cell membrane. In terms of biological role, integral membrane transporter that imports quinic acid to be catabolized as a carbon source. In Aspergillus niger (strain ATCC MYA-4892 / CBS 513.88 / FGSC A1513), this protein is Probable quinate permease (qutD).